We begin with the raw amino-acid sequence, 413 residues long: MRILIVDDENTKVVEICGVLRDAQITEESITVATTAASALKELKESYFDLLIIDMYLPNRIGEAPSLSGGVDLLKRINRGNDVQLPEHILGLTSNLEALAASEEDFSARSWFVEEVGPSKTTWKLRLMEKLQYLKAREEYQGNQSKSEIISTRPECEVLFVCALLDPELTALHAVSGCDWEVVTFPGDPGIYWSASLKFGANTVSAICVCLPQMGLVAAGVTAAKAITLFKPKLVVMTGICAGRKGDCDLGDIIGANLTWDYGSGKFTEVAGAVVFEPAPFQAAATARVGGVLAELSNDNELLQKLYKESPGYRPAKVPKFHVAPLASGAAVQNHKEFFSGVVTQQRKMLGVDMEAFAIAWACHEALEPQPSWLVIKSVVDFADGTKDSQIQSFGSYISASLAIYAVDRLINR.

The Response regulatory domain occupies 2–129 (RILIVDDENT…KTTWKLRLME (128 aa)). At Asp-54 the chain carries 4-aspartylphosphate.

This is an uncharacterized protein from Sinorhizobium fredii (strain NBRC 101917 / NGR234).